Here is a 105-residue protein sequence, read N- to C-terminus: UPF0145 protein LPC_0273 (105 aa).

It belongs to the UPF0145 family.

This is UPF0145 protein LPC_0273 from Legionella pneumophila (strain Corby).